The chain runs to 121 residues: Insulin-like peptide 01 (121 aa).

An N-terminal signal peptide occupies residues 1–24 (MDSFTRASLITFLILLTLTSLVFS). Residues 25 to 45 (NGCMMRGGCFKTSEDAHRLIM) constitute a propeptide that is removed on maturation. Intrachain disulfides connect Cys52/Cys107, Cys64/Cys120, and Cys106/Cys111. A propeptide spans 69 to 97 (RRRKRDLRRKLGIVMDRKESHKFLRRRKR) (c peptide).

The protein belongs to the insulin family.

It is found in the secreted. Functionally, insulin decreases blood glucose concentration. May have evolved to activate insulin receptors (INSR) in vertebrates. Molecular docking studies reveals unique interaction with the human insulin receptor. In vivo, insulin-like peptide injection reduces blood glucose levels in two models of zebrafish diabetes (streptozotocin- and glucose-induced). Also shorter swimming distance of zebrafish larvae, an effect which is not observed with human insulin. This is Insulin-like peptide 01 from Exaiptasia diaphana (Tropical sea anemone).